The chain runs to 220 residues: ATP synthase F(0) complex subunit a (220 aa).

Transmembrane regions (helical) follow at residues 12-32 (PTLL…TLLP), 69-89 (WAMI…FTPT), 91-111 (QLSL…LLGL), 130-150 (LLIP…PFAL), 158-178 (LTAG…LLPM), and 183-203 (ALLT…VAMI).

It belongs to the ATPase A chain family. Component of the ATP synthase complex composed at least of ATP5F1A/subunit alpha, ATP5F1B/subunit beta, ATP5MC1/subunit c (homooctomer), MT-ATP6/subunit a, MT-ATP8/subunit 8, ATP5ME/subunit e, ATP5MF/subunit f, ATP5MG/subunit g, ATP5MK/subunit k, ATP5MJ/subunit j, ATP5F1C/subunit gamma, ATP5F1D/subunit delta, ATP5F1E/subunit epsilon, ATP5PF/subunit F6, ATP5PB/subunit b, ATP5PD/subunit d, ATP5PO/subunit OSCP. ATP synthase complex consists of a soluble F(1) head domain (subunits alpha(3) and beta(3)) - the catalytic core - and a membrane F(0) domain - the membrane proton channel (subunits c, a, 8, e, f, g, k and j). These two domains are linked by a central stalk (subunits gamma, delta, and epsilon) rotating inside the F1 region and a stationary peripheral stalk (subunits F6, b, d, and OSCP). Interacts with DNAJC30; interaction is direct.

It is found in the mitochondrion inner membrane. The catalysed reaction is H(+)(in) = H(+)(out). Functionally, subunit a, of the mitochondrial membrane ATP synthase complex (F(1)F(0) ATP synthase or Complex V) that produces ATP from ADP in the presence of a proton gradient across the membrane which is generated by electron transport complexes of the respiratory chain. ATP synthase complex consist of a soluble F(1) head domain - the catalytic core - and a membrane F(1) domain - the membrane proton channel. These two domains are linked by a central stalk rotating inside the F(1) region and a stationary peripheral stalk. During catalysis, ATP synthesis in the catalytic domain of F(1) is coupled via a rotary mechanism of the central stalk subunits to proton translocation. With the subunit c (ATP5MC1), forms the proton-conducting channel in the F(0) domain, that contains two crucial half-channels (inlet and outlet) that facilitate proton movement from the mitochondrial intermembrane space (IMS) into the matrix. Protons are taken up via the inlet half-channel and released through the outlet half-channel, following a Grotthuss mechanism. The protein is ATP synthase F(0) complex subunit a of Latimeria chalumnae (Coelacanth).